Reading from the N-terminus, the 436-residue chain is Tol-Pal system protein TolB (436 aa).

The N-terminal stretch at 1–28 is a signal peptide; it reads MEMLRRNFFRLLMVLVAGCGLIASPANA.

The protein belongs to the TolB family. As to quaternary structure, the Tol-Pal system is composed of five core proteins: the inner membrane proteins TolA, TolQ and TolR, the periplasmic protein TolB and the outer membrane protein Pal. They form a network linking the inner and outer membranes and the peptidoglycan layer.

It is found in the periplasm. Functionally, part of the Tol-Pal system, which plays a role in outer membrane invagination during cell division and is important for maintaining outer membrane integrity. The protein is Tol-Pal system protein TolB of Rhizobium meliloti (strain 1021) (Ensifer meliloti).